The primary structure comprises 361 residues: DNA replication and repair protein RecF (361 aa).

30–37 contacts ATP; sequence GDNAQGKT.

It belongs to the RecF family.

Its subcellular location is the cytoplasm. The RecF protein is involved in DNA metabolism; it is required for DNA replication and normal SOS inducibility. RecF binds preferentially to single-stranded, linear DNA. It also seems to bind ATP. This chain is DNA replication and repair protein RecF, found in Clostridium perfringens (strain ATCC 13124 / DSM 756 / JCM 1290 / NCIMB 6125 / NCTC 8237 / Type A).